Consider the following 79-residue polypeptide: Putative defensin-like protein 146 (79 aa).

Positions 1–25 are cleaved as a signal peptide; sequence MMKNQFQLSLIILTFFILLELGVMG. 4 disulfides stabilise this stretch: Cys-35–Cys-78, Cys-46–Cys-66, Cys-51–Cys-72, and Cys-55–Cys-74.

It belongs to the DEFL family.

Its subcellular location is the secreted. The sequence is that of Putative defensin-like protein 146 (LCR9) from Arabidopsis thaliana (Mouse-ear cress).